Here is a 266-residue protein sequence, read N- to C-terminus: Trehalose-6-phosphate phosphatase (266 aa).

The Nucleophile role is filled by D20. Mg(2+) is bound by residues D20, D22, and D198. Residue 20–22 (DLD) participates in substrate binding.

Belongs to the trehalose phosphatase family. The cofactor is Mg(2+). Mn(2+) serves as cofactor. Requires Co(2+) as cofactor. It depends on Zn(2+) as a cofactor.

It carries out the reaction alpha,alpha-trehalose 6-phosphate + H2O = alpha,alpha-trehalose + phosphate. The protein operates within glycan biosynthesis; trehalose biosynthesis. In terms of biological role, removes the phosphate from trehalose 6-phosphate (Tre6P) to produce free trehalose. Also catalyzes the dephosphorylation of glucose-6-phosphate (Glu6P) and 2-deoxyglucose-6-phosphate (2dGlu6P). This Escherichia coli (strain K12) protein is Trehalose-6-phosphate phosphatase (otsB).